The sequence spans 185 residues: Ion-translocating oxidoreductase complex subunit B (185 aa).

A hydrophobic region spans residues Met-1 to Ala-26. The 4Fe-4S domain occupies Glu-32–Val-90. [4Fe-4S] cluster-binding residues include Cys-49, Cys-52, Cys-57, Cys-73, Cys-115, Cys-118, Cys-121, Cys-125, Cys-145, Cys-148, Cys-151, and Cys-155. 4Fe-4S ferredoxin-type domains are found at residues Arg-106 to Lys-135 and Leu-136 to Leu-165.

This sequence belongs to the 4Fe4S bacterial-type ferredoxin family. RnfB subfamily. As to quaternary structure, the complex is composed of six subunits: RnfA, RnfB, RnfC, RnfD, RnfE and RnfG. [4Fe-4S] cluster serves as cofactor.

The protein resides in the cell inner membrane. Functionally, part of a membrane-bound complex that couples electron transfer with translocation of ions across the membrane. The sequence is that of Ion-translocating oxidoreductase complex subunit B from Tolumonas auensis (strain DSM 9187 / NBRC 110442 / TA 4).